The primary structure comprises 387 residues: Prostatic acid phosphatase (387 aa).

Positions 1 to 34 (MRNAALLMTRATSLRLSLLLLLSFLPDLDGGVRA) are cleaved as a signal peptide. Residue arginine 45 coordinates substrate. The Nucleophile role is filled by histidine 46. Arginine 49 is a substrate binding site. Asparagine 96 is a glycosylation site (N-linked (GlcNAc...) asparagine). Arginine 113 provides a ligand contact to substrate. 3 disulfide bridges follow: cysteine 163-cysteine 374, cysteine 217-cysteine 315, and cysteine 349-cysteine 353. Asparagine 222 is a glycosylation site (N-linked (GlcNAc...) asparagine). Histidine 291 provides a ligand contact to substrate. The active-site Proton donor is aspartate 292. Residue asparagine 335 is glycosylated (N-linked (GlcNAc...) asparagine).

The protein belongs to the histidine acid phosphatase family. Homodimer; dimer formation is required for phosphatase activity.

The protein resides in the secreted. The catalysed reaction is a phosphate monoester + H2O = an alcohol + phosphate. It catalyses the reaction 1-(9Z-octadecenoyl)-sn-glycero-3-phosphate + H2O = 1-(9Z-octadecenoyl)-sn-glycerol + phosphate. The enzyme catalyses O-phospho-L-tyrosyl-[protein] + H2O = L-tyrosyl-[protein] + phosphate. A non-specific tyrosine phosphatase that dephosphorylates a diverse number of substrates under acidic conditions (pH 4-6) including alkyl, aryl, and acyl orthophosphate monoesters and phosphorylated proteins. Has lipid phosphatase activity and inactivates lysophosphatidic acid in seminal plasma. This is Prostatic acid phosphatase (ACP3) from Bos taurus (Bovine).